A 306-amino-acid polypeptide reads, in one-letter code: tRNA dimethylallyltransferase 2 (306 aa).

Residue 11–18 participates in ATP binding; it reads GPTASGKT. Substrate is bound at residue 13 to 18; that stretch reads TASGKT. Residues 36 to 39 are interaction with substrate tRNA; sequence DSRQ.

The protein belongs to the IPP transferase family. As to quaternary structure, monomer. It depends on Mg(2+) as a cofactor.

The catalysed reaction is adenosine(37) in tRNA + dimethylallyl diphosphate = N(6)-dimethylallyladenosine(37) in tRNA + diphosphate. Its function is as follows. Catalyzes the transfer of a dimethylallyl group onto the adenine at position 37 in tRNAs that read codons beginning with uridine, leading to the formation of N6-(dimethylallyl)adenosine (i(6)A). In Bacteroides thetaiotaomicron (strain ATCC 29148 / DSM 2079 / JCM 5827 / CCUG 10774 / NCTC 10582 / VPI-5482 / E50), this protein is tRNA dimethylallyltransferase 2.